Here is a 195-residue protein sequence, read N- to C-terminus: Small ribosomal subunit protein uS5 (195 aa).

The disordered stretch occupies residues 1-20 (MAREREGGGRGRREDREERD). One can recognise an S5 DRBM domain in the interval 23 to 86 (FVDKLVHINR…EAAKRGLIRV (64 aa)). The interval 161-195 (DSPRSVAARRGIKVSTLQSRRRDADPADQSEAAVA) is disordered.

The protein belongs to the universal ribosomal protein uS5 family. As to quaternary structure, part of the 30S ribosomal subunit. Contacts proteins S4 and S8.

Functionally, with S4 and S12 plays an important role in translational accuracy. Its function is as follows. Located at the back of the 30S subunit body where it stabilizes the conformation of the head with respect to the body. This is Small ribosomal subunit protein uS5 from Methylobacterium radiotolerans (strain ATCC 27329 / DSM 1819 / JCM 2831 / NBRC 15690 / NCIMB 10815 / 0-1).